Here is a 397-residue protein sequence, read N- to C-terminus: GDNF family receptor alpha-3 (397 aa).

Positions 1–28 are cleaved as a signal peptide; the sequence is MGLSWSPRPPLLMILLLVLSLWLPLGAG. Cysteines 48 and 54 form a disulfide. N-linked (GlcNAc...) asparagine glycans are attached at residues Asn-92 and Asn-145. 10 cysteine pairs are disulfide-bonded: Cys-159–Cys-215, Cys-166–Cys-172, Cys-183–Cys-193, Cys-188–Cys-236, Cys-217–Cys-224, Cys-245–Cys-313, Cys-252–Cys-258, Cys-269–Cys-285, Cys-278–Cys-337, and Cys-315–Cys-325. A glycan (N-linked (GlcNAc...) asparagine) is linked at Asn-306. A lipid anchor (GPI-anchor amidated asparagine) is attached at Asn-371. Positions 372-397 are cleaved as a propeptide — removed in mature form; sequence PALRLQPRLPILSFSILPLILLQTLW.

This sequence belongs to the GDNFR family. As to quaternary structure, interacts with ARTN ligand and RET: forms a 2:2:2 ternary complex composed of ARTN ligand, GFRA3 and RET receptor. Interacts with SORL1.

The protein resides in the cell membrane. Functionally, receptor for artemin (ARTN), a growth factor that supports the survival of sensory and sympathetic peripheral neurons. ARTN-binding leads to autophosphorylation and activation of the RET receptor. This chain is GDNF family receptor alpha-3 (Gfra3), found in Mus musculus (Mouse).